The chain runs to 207 residues: Small ribosomal subunit protein uS4 (207 aa).

Residues 35 to 54 (RPKPPGPQLGRPRRLSDRGQ) form a disordered region. Positions 97–163 (RRLDNVLFRL…AYFKTLAENI (67 aa)) constitute an S4 RNA-binding domain.

Belongs to the universal ribosomal protein uS4 family. As to quaternary structure, part of the 30S ribosomal subunit. Contacts protein S5. The interaction surface between S4 and S5 is involved in control of translational fidelity.

One of the primary rRNA binding proteins, it binds directly to 16S rRNA where it nucleates assembly of the body of the 30S subunit. Its function is as follows. With S5 and S12 plays an important role in translational accuracy. This Dehalococcoides mccartyi (strain CBDB1) protein is Small ribosomal subunit protein uS4.